Reading from the N-terminus, the 638-residue chain is Chaperone protein HtpG (638 aa).

The segment at 1-328 is a; substrate-binding; sequence MGDVEELKFS…SSDLPLNISR (328 aa). Residues 329 to 558 form a b region; it reads ETLQNNMVIE…EHALDIRMER (230 aa). The interval 484 to 508 is disordered; the sequence is LEKFTEGDDQQSTKKKKEKKDTDDA. Residues 559-638 are c; it reads FLREQKQLSY…NQVLARLFKK (80 aa).

This sequence belongs to the heat shock protein 90 family. As to quaternary structure, homodimer.

It is found in the cytoplasm. In terms of biological role, molecular chaperone. Has ATPase activity. The protein is Chaperone protein HtpG of Anaplasma marginale (strain St. Maries).